Consider the following 520-residue polypeptide: GMP synthase [glutamine-hydrolyzing] (520 aa).

One can recognise a Glutamine amidotransferase type-1 domain in the interval 9–202 (KILILDFGSQ…VRKICGCSGK (194 aa)). Catalysis depends on cysteine 86, which acts as the Nucleophile. Active-site residues include histidine 176 and glutamate 178. The GMPS ATP-PPase domain occupies 203-395 (WTPGQIIEDA…LGLPHQMVWR (193 aa)). 230 to 236 (SGGVDSS) provides a ligand contact to ATP.

As to quaternary structure, homodimer.

It catalyses the reaction XMP + L-glutamine + ATP + H2O = GMP + L-glutamate + AMP + diphosphate + 2 H(+). It participates in purine metabolism; GMP biosynthesis; GMP from XMP (L-Gln route): step 1/1. In terms of biological role, catalyzes the synthesis of GMP from XMP. This Geotalea daltonii (strain DSM 22248 / JCM 15807 / FRC-32) (Geobacter daltonii) protein is GMP synthase [glutamine-hydrolyzing].